Reading from the N-terminus, the 810-residue chain is Transitional endoplasmic reticulum ATPase homolog 2 (810 aa).

ATP is bound by residues Pro252–Leu258, Asn353, His389, and Gly526–Leu531. The span at Arg713 to Glu727 shows a compositional bias: basic and acidic residues. Disordered regions lie at residues Arg713 to Glu732 and Phe777 to Asn810. Residues Pro793 to Gly802 are compositionally biased toward gly residues. The tract at residues Asp805–Asn810 is interaction with ufd-2.

This sequence belongs to the AAA ATPase family. CDC48 subfamily. As to quaternary structure, homohexamer; oligomerization is ATP-independent. Forms a ring-shaped particle of 18.3 nm diameter, that displays 6-fold radial symmetry. Interacts with cdc-48.1 and thus may form heterohexamers. Forms a complex composed of ubxn-3, cdc-48.1 and/or cdc-48.2 and substrate cdt-1. Interacts (via N-terminus) with ubxn-3. Interacts (via N-terminus) with atx-3 (via RRDR motif). Interacts (via N-terminus) with ubxn-5. Interacts with ufd-1. Interacts (via DDDLYN motif) with ufd-2. Interacts (via N-terminus) with ubxn-1. Interacts (via N-terminus) with ubxn-2. Interacts (via N-terminus) with ubxn-4. Interacts with ubxn-6. As to expression, expressed in body wall muscles.

The protein localises to the cytoplasm. It carries out the reaction ATP + H2O = ADP + phosphate + H(+). With respect to regulation, the first ATP-binding region has low ATPase activity. The second ATP-binding region is responsible for ATPase activity. ATP binding to the first ATP-binding region induces intrinsic activity of the second ATP-binding region. While ATP binding to the first ATP-binding region appears to prevent ATP hydrolysis by the second ATP-binding region, ADP-binding to first region promotes the coordinate and cooperative ATPase cycle of the second ATP-binding region. ATP binding to the first ATP-binding region induces a conformational change, promoting the rotation of the first ATP-binding region relative to the second ATP-binding region in the hexamer. Inhibited by N-ethylmaleimide (NEM). ATP-dependent chaperone which probably uses the energy provided by ATP hydrolysis to generate mechanical force to unfold substrate proteins, disassemble protein complexes, and disaggregate protein aggregates. However, able to prevent aggregation of unfolded proteins also in an ATP-independent manner. Targets polyubiquitinated proteins for proteasomal degradation by binding to 'Lys-48'-linked polyubiquitin chains. Involved in the cytoplasmic elimination of misfolded proteins exported from the ER. This pathway, known as ERAD, prevents the activation of the unfolded protein response (UPR) caused by the accumulation of misfolded proteins in the ER. Together with udf-2 and chn-1, regulates myosin assembly in body wall muscles by targeting myosin chaperone unc-45 for proteasomal degradation. During oocyte meiosis and together with cdc-48.1, required for chromosome condensation at the diakinesis phase in prophase I and for progression of metaphase I. During the first embryonic cell division, regulates DNA replication and thus chromosome segregation and decondensation, and nuclear envelope re-assembly. In S phase and in association with ufd-1, npl-4.1 and/or npl-4.2 and ubxn-3, ensures the degradation of DNA licensing factor cdt-1 after the initiation of DNA replication and thus the disassembly of the DNA replication CMG helicase complex by promoting the dissociation from chromatin of several of its components including cdc-45 and sld-5. Regulates ubxn-3 nuclear localization during S phase. During the first embryonic cell divisions and together with cdc-48.1, regulates the re-assembly of the nuclear envelope after mitosis possibly by inactivating kinase air-2, a component of the chromosomal passenger complex (CPC). The polypeptide is Transitional endoplasmic reticulum ATPase homolog 2 (cdc-48.2) (Caenorhabditis elegans).